Consider the following 663-residue polypeptide: Transforming growth factor beta activator LRRC32 (663 aa).

An N-terminal signal peptide occupies residues Met-1–Ala-17. Residues Ile-18–Asn-628 lie on the Extracellular side of the membrane. Positions Arg-22–Ser-49 constitute an LRRNT domain. 10 LRR repeats span residues Ser-49–Phe-72, Tyr-73–Ala-96, Pro-98–Arg-123, Pro-125–Glu-148, Thr-149–Gly-172, Pro-174–Ala-196, Leu-197–Gln-220, Gln-222–Gln-241, Gln-243–Arg-267, and Ile-269–Gly-287. A glycan (N-linked (GlcNAc...) asparagine) is linked at Asn-204. Asn-272, Asn-305, and Asn-309 each carry an N-linked (GlcNAc...) asparagine glycan. Residues Leu-291–Ser-311 are disordered. Residues Ser-301–Ser-311 show a composition bias toward polar residues. 11 LRR repeats span residues Leu-315–His-338, Thr-340–Ser-362, Leu-363–Leu-386, Gly-387–Ser-409, Ala-411–Gly-433, Ile-443–His-466, Pro-468–Gly-489, Glu-491–Phe-514, Leu-515–Leu-539, Val-541–Gly-559, and Glu-561–Ala-584. The N-linked (GlcNAc...) asparagine glycan is linked to Asn-346. N-linked (GlcNAc...) asparagine glycosylation is present at Asn-546. The LRRCT domain occupies Asn-572 to Lys-621. Residues Leu-629–Ile-649 traverse the membrane as a helical segment. Residues Cys-650–Ala-663 are Cytoplasmic-facing.

This sequence belongs to the LRRC32/LRRC33 family. Interacts with TGFB1; associates via disulfide bonds with the Latency-associated peptide chain (LAP) regulatory chain of TGFB1, leading to regulate activation of TGF-beta-1. Interacts with TGFB2. Interacts with TGFB3; associates via disulfide bonds with the Latency-associated peptide chain (LAP) regulatory chain of TGFB3, leading to regulate activation of TGF-beta-3. Interacts with LAPTM4B; decreases TGFB1 production in regulatory T-cells. As to expression, present in medial edge epithelial cells at 14.5 dpc (at protein level).

It is found in the cell membrane. The protein localises to the cell surface. Functionally, key regulator of transforming growth factor beta (TGFB1, TGFB2 and TGFB3) that controls TGF-beta activation by maintaining it in a latent state during storage in extracellular space. Associates specifically via disulfide bonds with the Latency-associated peptide (LAP), which is the regulatory chain of TGF-beta, and regulates integrin-dependent activation of TGF-beta. Able to outcompete LTBP1 for binding to LAP regulatory chain of TGF-beta. Controls activation of TGF-beta-1 (TGFB1) on the surface of activated regulatory T-cells (Tregs). Required for epithelial fusion during palate development by regulating activation of TGF-beta-3 (TGFB3). The sequence is that of Transforming growth factor beta activator LRRC32 from Mus musculus (Mouse).